Consider the following 550-residue polypeptide: Formin-binding protein 1-like (550 aa).

Residues 1 to 263 (MSWGTELWDQ…AAKSVDERRD (263 aa)) enclose the F-BAR domain. 2 coiled-coil regions span residues 66-258 (FTSC…AKSV) and 334-426 (LEDF…QRSE). The REM-1 domain maps to 339–416 (HLPPEQRRKR…IHKNEAWLSE (78 aa)). Positions 423-432 (QRSERRHSAE) are enriched in basic and acidic residues. The disordered stretch occupies residues 423–467 (QRSERRHSAEANHLVAQGRESPEGSYTEDANQEGRVQPQPHAHPE). An SH3 domain is found at 479–540 (PAIGHCKSLY…PTSYIDITLE (62 aa)).

Belongs to the FNBP1 family. Homodimerizes, the dimers can polymerize end-to-end to form filamentous structures. Interacts with GTP-bound cdc42 and wasl/n-wasp.

The protein localises to the cytoplasm. It is found in the cytoskeleton. Its subcellular location is the cell cortex. The protein resides in the cytoplasmic vesicle. It localises to the cell membrane. Its function is as follows. Required to coordinate membrane tubulation with reorganization of the actin cytoskeleton during endocytosis. Promotes cdc42-induced actin polymerization by activating the wasl-waspip complex, the predominant form of wasl/n-wasp in cells. Essential for autophagy of intracellular bacterial pathogens. The sequence is that of Formin-binding protein 1-like (fnbp1l) from Xenopus tropicalis (Western clawed frog).